The sequence spans 130 residues: Large ribosomal subunit protein uL14 (130 aa).

The protein belongs to the universal ribosomal protein uL14 family. Part of the 50S ribosomal subunit. Forms a cluster with proteins L3 and L19. In the 70S ribosome, L14 and L19 interact and together make contacts with the 16S rRNA in bridges B5 and B8.

Binds to 23S rRNA. Forms part of two intersubunit bridges in the 70S ribosome. The protein is Large ribosomal subunit protein uL14 of Leptospira interrogans serogroup Icterohaemorrhagiae serovar copenhageni (strain Fiocruz L1-130).